The following is a 269-amino-acid chain: Hydroxyethylthiazole kinase (269 aa).

Methionine 41 lines the substrate pocket. Positions 117 and 165 each coordinate ATP. Glycine 192 is a substrate binding site.

Belongs to the Thz kinase family. Mg(2+) is required as a cofactor.

It carries out the reaction 5-(2-hydroxyethyl)-4-methylthiazole + ATP = 4-methyl-5-(2-phosphooxyethyl)-thiazole + ADP + H(+). It functions in the pathway cofactor biosynthesis; thiamine diphosphate biosynthesis; 4-methyl-5-(2-phosphoethyl)-thiazole from 5-(2-hydroxyethyl)-4-methylthiazole: step 1/1. Its function is as follows. Catalyzes the phosphorylation of the hydroxyl group of 4-methyl-5-beta-hydroxyethylthiazole (THZ). The protein is Hydroxyethylthiazole kinase of Actinobacillus succinogenes (strain ATCC 55618 / DSM 22257 / CCUG 43843 / 130Z).